The sequence spans 121 residues: Protein TCL1B5 (121 aa).

The protein belongs to the TCL1 family.

The protein is Protein TCL1B5 (Tcl1b5) of Mus musculus (Mouse).